We begin with the raw amino-acid sequence, 213 residues long: Orotate phosphoribosyltransferase (213 aa).

Residue Lys-26 coordinates 5-phospho-alpha-D-ribose 1-diphosphate. 34 to 35 (FF) is a binding site for orotate. Residues 72 to 73 (YK), Arg-99, Lys-100, Lys-103, His-105, and 124 to 132 (DDVITAGTA) contribute to the 5-phospho-alpha-D-ribose 1-diphosphate site. Thr-128 and Arg-156 together coordinate orotate.

The protein belongs to the purine/pyrimidine phosphoribosyltransferase family. PyrE subfamily. In terms of assembly, homodimer. Mg(2+) is required as a cofactor.

It catalyses the reaction orotidine 5'-phosphate + diphosphate = orotate + 5-phospho-alpha-D-ribose 1-diphosphate. It participates in pyrimidine metabolism; UMP biosynthesis via de novo pathway; UMP from orotate: step 1/2. Functionally, catalyzes the transfer of a ribosyl phosphate group from 5-phosphoribose 1-diphosphate to orotate, leading to the formation of orotidine monophosphate (OMP). The protein is Orotate phosphoribosyltransferase of Vibrio vulnificus (strain YJ016).